The primary structure comprises 258 residues: NAD-capped RNA hydrolase NudC (258 aa).

Arg69 contributes to the substrate binding site. Cys98 and Cys101 together coordinate Zn(2+). Glu111 serves as a coordination point for substrate. Residues Cys116 and Cys119 each contribute to the Zn(2+) site. Tyr124 contributes to the substrate binding site. A Nudix hydrolase domain is found at 125-248 (PQIAPCIIVA…TVARRLIEDT (124 aa)). 3 residues coordinate a divalent metal cation: Ala158, Glu174, and Glu178. Residues 159–180 (GFVEVGETLEQTVAREVMEESG) carry the Nudix box motif. 192 to 199 (QPWPFPMS) contacts substrate. Glu219 serves as a coordination point for a divalent metal cation. Ala241 contacts substrate.

Belongs to the Nudix hydrolase family. NudC subfamily. As to quaternary structure, homodimer. The cofactor is Mg(2+). Mn(2+) serves as cofactor. Zn(2+) is required as a cofactor.

The catalysed reaction is a 5'-end NAD(+)-phospho-ribonucleoside in mRNA + H2O = a 5'-end phospho-adenosine-phospho-ribonucleoside in mRNA + beta-nicotinamide D-ribonucleotide + 2 H(+). The enzyme catalyses NAD(+) + H2O = beta-nicotinamide D-ribonucleotide + AMP + 2 H(+). It carries out the reaction NADH + H2O = reduced beta-nicotinamide D-ribonucleotide + AMP + 2 H(+). Functionally, mRNA decapping enzyme that specifically removes the nicotinamide adenine dinucleotide (NAD) cap from a subset of mRNAs by hydrolyzing the diphosphate linkage to produce nicotinamide mononucleotide (NMN) and 5' monophosphate mRNA. The NAD-cap is present at the 5'-end of some mRNAs and stabilizes RNA against 5'-processing. Has preference for mRNAs with a 5'-end purine. Catalyzes the hydrolysis of a broad range of dinucleotide pyrophosphates. This Enterobacter sp. (strain 638) protein is NAD-capped RNA hydrolase NudC.